The chain runs to 393 residues: Peptidyl-prolyl cis-trans isomerase CYP7 (393 aa).

The PPIase cyclophilin-type domain occupies 8-196; sequence YLDISIDKKP…SDVRISDCGV (189 aa). TPR repeat units lie at residues 240 to 273, 292 to 325, and 330 to 363; these read ANIIKESGTLLFKKKDYSNAFFKYRKSLNYINEY, MKIYLNLSLVLFNLERYDDAIMYATYLLEMDNVP, and AKAYYRRGNSYLKKKRLDEALQDYIFCKEKNPDD.

Interacts with RPD3 and CNS1.

It carries out the reaction [protein]-peptidylproline (omega=180) = [protein]-peptidylproline (omega=0). Functionally, PPIases accelerate the folding of proteins. It catalyzes the cis-trans isomerization of proline imidic peptide bonds in oligopeptides. Plays a major role in negative regulation of the heat shock transcription factor (HSF). The protein is Peptidyl-prolyl cis-trans isomerase CYP7 (CPR7) of Saccharomyces cerevisiae (strain ATCC 204508 / S288c) (Baker's yeast).